The primary structure comprises 1366 residues: ABC multidrug transporter MDR2 (1366 aa).

Residues 52 to 72 (IALIVIGTIAGIGAGIPFPLL) form a helical membrane-spanning segment. Residues 56–354 (VIGTIAGIGA…MAPFMHIFAS (299 aa)) form the ABC transmembrane type-1 1 domain. An N-linked (GlcNAc...) asparagine glycan is attached at Asn-84. A run of 5 helical transmembrane segments spans residues 106–126 (VLQV…HTGC), 180–200 (KVGL…VAFL), 202–222 (VATI…MAFG), 288–308 (IQFG…FWQG), and 323–343 (VSVG…FVLS). The ABC transporter 1 domain occupies 390 to 669 (IELQDVTFNY…DGVYAGMVRL (280 aa)). Position 425–432 (425–432 (GTSGSGKS)) interacts with ATP. A glycan (N-linked (GlcNAc...) asparagine) is linked at Asn-620. The tract at residues 727 to 746 (PEEADSLPTEPEAKKEKPKQ) is disordered. A run of 4 helical transmembrane segments spans residues 768–788 (LGLI…VIFG), 807–827 (GMLF…AVIV), 868–888 (LLVA…GTTI), and 898–918 (LFAG…VLLA). One can recognise an ABC transmembrane type-1 2 domain in the interval 768 to 1055 (LGLITSIMIG…MFALVPDISK (288 aa)). An N-linked (GlcNAc...) asparagine glycan is attached at Asn-976. The next 2 membrane-spanning stretches (helical) occupy residues 995 to 1015 (FWLS…YWWG) and 1019 to 1039 (ILAG…LLFS). The 240-residue stretch at 1122–1361 (VQFRNVHFRY…CESYRANVIH (240 aa)) folds into the ABC transporter 2 domain. Residue 1157 to 1164 (GPSGSGKS) participates in ATP binding.

This sequence belongs to the ABC transporter superfamily. ABCB family. Multidrug resistance exporter (TC 3.A.1.201) subfamily.

It localises to the cell membrane. Functionally, pleiotropic ABC efflux transporter that may be involved in the modulation susceptibility to a wide range of unrelated cytotoxic compounds. Does not act as an efflux pump for azoles, including fluconazole, itraconazole, ketoconazole, miconazole and voriconazole, nor does it modulate susceptibility to cycloheximide. This is ABC multidrug transporter MDR2 from Trichophyton rubrum (strain ATCC MYA-4607 / CBS 118892) (Athlete's foot fungus).